The primary structure comprises 89 residues: uncharacterized protein (89 aa).

The 89-residue stretch at 1–89 folds into the HTH arsR-type domain; the sequence is MEKYEKAAEI…KEIIKLVDEL (89 aa).

This is an uncharacterized protein from Methanocaldococcus jannaschii (strain ATCC 43067 / DSM 2661 / JAL-1 / JCM 10045 / NBRC 100440) (Methanococcus jannaschii).